Reading from the N-terminus, the 307-residue chain is Aspartate carbamoyltransferase catalytic subunit (307 aa).

Residues arginine 58 and threonine 59 each coordinate carbamoyl phosphate. Lysine 86 is an L-aspartate binding site. Carbamoyl phosphate is bound by residues arginine 108, histidine 136, and glutamine 139. L-aspartate-binding residues include arginine 169 and arginine 223. Glycine 264 and proline 265 together coordinate carbamoyl phosphate.

The protein belongs to the aspartate/ornithine carbamoyltransferase superfamily. ATCase family. Heterododecamer (2C3:3R2) of six catalytic PyrB chains organized as two trimers (C3), and six regulatory PyrI chains organized as three dimers (R2).

It carries out the reaction carbamoyl phosphate + L-aspartate = N-carbamoyl-L-aspartate + phosphate + H(+). The protein operates within pyrimidine metabolism; UMP biosynthesis via de novo pathway; (S)-dihydroorotate from bicarbonate: step 2/3. Functionally, catalyzes the condensation of carbamoyl phosphate and aspartate to form carbamoyl aspartate and inorganic phosphate, the committed step in the de novo pyrimidine nucleotide biosynthesis pathway. In Moorella thermoacetica (strain ATCC 39073 / JCM 9320), this protein is Aspartate carbamoyltransferase catalytic subunit.